Here is a 154-residue protein sequence, read N- to C-terminus: Large ribosomal subunit protein uL23 (154 aa).

This sequence belongs to the universal ribosomal protein uL23 family.

In terms of biological role, this protein binds to a specific region on the 26S rRNA. This chain is Large ribosomal subunit protein uL23 (RPL23A), found in Fritillaria agrestis (Stinkbells).